The following is a 149-amino-acid chain: D-aminoacyl-tRNA deacylase (149 aa).

The Gly-cisPro motif, important for rejection of L-amino acids motif lies at 137-138; that stretch reads GP.

It belongs to the DTD family. In terms of assembly, homodimer.

It localises to the cytoplasm. The catalysed reaction is glycyl-tRNA(Ala) + H2O = tRNA(Ala) + glycine + H(+). It carries out the reaction a D-aminoacyl-tRNA + H2O = a tRNA + a D-alpha-amino acid + H(+). In terms of biological role, an aminoacyl-tRNA editing enzyme that deacylates mischarged D-aminoacyl-tRNAs. Also deacylates mischarged glycyl-tRNA(Ala), protecting cells against glycine mischarging by AlaRS. Acts via tRNA-based rather than protein-based catalysis; rejects L-amino acids rather than detecting D-amino acids in the active site. By recycling D-aminoacyl-tRNA to D-amino acids and free tRNA molecules, this enzyme counteracts the toxicity associated with the formation of D-aminoacyl-tRNA entities in vivo and helps enforce protein L-homochirality. In Caldicellulosiruptor bescii (strain ATCC BAA-1888 / DSM 6725 / KCTC 15123 / Z-1320) (Anaerocellum thermophilum), this protein is D-aminoacyl-tRNA deacylase.